A 52-amino-acid polypeptide reads, in one-letter code: Mitogenic lectin alpha chain (52 aa).

This sequence belongs to the leguminous lectin family. In terms of assembly, tetramer of two alpha and two beta chains.

The chain is Mitogenic lectin alpha chain from Vicia sativa (Spring vetch).